The following is a 309-amino-acid chain: Succinate--CoA ligase [ADP-forming] subunit alpha-2, mitochondrial (309 aa).

A hydrogenosome-targeting transit peptide spans 1–9 (MLSSSFERN). Residues K54 and 107–109 (ITE) each bind CoA. A substrate-binding site is contributed by Y171. The Tele-phosphohistidine intermediate role is filled by H262.

The protein belongs to the succinate/malate CoA ligase alpha subunit family. In terms of assembly, heterodimer of an alpha and a beta subunit.

It localises to the hydrogenosome lumen. The catalysed reaction is succinate + ATP + CoA = succinyl-CoA + ADP + phosphate. It functions in the pathway carbohydrate metabolism; tricarboxylic acid cycle; succinate from succinyl-CoA (ligase route): step 1/1. Succinyl-CoA synthetase functions in the citric acid cycle (TCA), coupling the hydrolysis of succinyl-CoA to the synthesis of ATP and thus represents the only step of substrate-level phosphorylation in the TCA. The alpha subunit of the enzyme binds the substrates coenzyme A and phosphate, while succinate binding and nucleotide specificity is provided by the beta subunit. The chain is Succinate--CoA ligase [ADP-forming] subunit alpha-2, mitochondrial (ALPHA-SCS2) from Trichomonas vaginalis.